The sequence spans 579 residues: Leucine-rich repeat-containing protein 15 (579 aa).

The first 21 residues, 1–21 (MPLKHYLLLLVSCQAWAAGLA), serve as a signal peptide directing secretion. The region spanning 22-53 (YYGCPSECTCSRASQVECTGAQIVAMPSPLPW) is the LRRNT domain. Residues 22–536 (YYGCPSECTC…TWGMTDAQSG (515 aa)) lie on the Extracellular side of the membrane. 15 LRR repeats span residues 54-75 (NAMSLQILNTHITELPEDKFLN), 78-99 (ALIALKMEKNELANIMPGAFRN), 102-123 (SLRHLSLANNKLKNLPVRLFQD), 126-147 (NLETLLLSNNQLVQIQPAQFSQ), 150-171 (NLKELQLYGNNLEYIPEGVFDH), 174-195 (GLTKLNLGNNGFTHLSPRVFQH), 198-219 (NLQVLRLYENRLSDIPMGTFDA), 222-243 (NLQELALQENQIGTLSPGLFHN), 246-267 (NLQRLYLSNNHISHLPPGIFMQ), 270-291 (HLNKLTLFGNSLKELSPGVFGP), 294-315 (NLRELWLYNNHITSLPDNAFSH), 318-339 (QLQVLILSHNQLSYISPGAFNG), 342-363 (NLRELSLHTNALQDLDGNVFRS), 366-387 (NLRNVSLQNNRLRQLPGSIFAN), and 390-411 (GLMTIQLQNNNLENLPLGIFDH). N-linked (GlcNAc...) asparagine glycosylation occurs at N75. N369 carries an N-linked (GlcNAc...) asparagine glycan. In terms of domain architecture, LRRCT spans 423–473 (NPWRCDSNILPLHDWLILNRARLGTDTLPVCSSPASVRGQSLVIINVNFPG). The segment at 476–509 (VQGPETPEVSSYPDTSSYPDSTSISSTTEITRST) is disordered. Over residues 485–506 (SSYPDTSSYPDSTSISSTTEIT) the composition is skewed to low complexity. A helical membrane pass occupies residues 537–557 (LAIAAIVIGIIALACSLAACI). At 558–579 (CCCCCKKRSQAVLMQMKAPNEC) the chain is on the cytoplasmic side.

Expressed in chodrocytes (at protein level).

It is found in the cell membrane. The sequence is that of Leucine-rich repeat-containing protein 15 (Lrrc15) from Mus musculus (Mouse).